A 1657-amino-acid polypeptide reads, in one-letter code: Endoribonuclease Dicer homolog 4 (1657 aa).

Residues 1–14 (MGDAAAAAPAAAAA) show a composition bias toward low complexity. Positions 1–26 (MGDAAAAAPAAAAAGPSSTRGEPKDP) are disordered. The Helicase ATP-binding domain occupies 37-214 (LCKRAVEENI…SHSFTEKGGR (178 aa)). 50–57 (LGTGCGKT) is a binding site for ATP. Residues 157-160 (DECH) carry the DECH box motif. Residues 400 to 567 (NKFSVLINVL…TSNDMFDCLE (168 aa)) enclose the Helicase C-terminal domain. The region spanning 585 to 675 (SVSLLHCYCD…LPGPGSRKNK (91 aa)) is the Dicer dsRNA-binding fold domain. The PAZ domain occupies 856 to 978 (DVSVHASYSS…LPPELCSLKV (123 aa)). RNase III domains follow at residues 1010-1173 (DVML…VEGG) and 1214-1358 (IAGL…LDSG). Mg(2+) is bound by residues Glu1252, Asp1344, and Glu1347. A DRBM 1 domain is found at 1384-1451 (NPMRELRELC…AQETLSKLKN (68 aa)). Residues 1525 to 1556 (GSGKHDVNNGRNNQPKLATQSGRLPSEATEKS) are disordered. Residues 1533-1547 (NGRNNQPKLATQSGR) are compositionally biased toward polar residues. A DRBM 2 domain is found at 1569–1645 (TARSFLFELC…AQGALWCLKQ (77 aa)).

This sequence belongs to the helicase family. Dicer subfamily. As to quaternary structure, may interact with ARGONAUTE1 or PINHEAD through their common PAZ domains. Requires Mg(2+) as cofactor. Mn(2+) serves as cofactor. As to expression, expressed in roots, leaf blades, leaf sheaths, shoot apices and spikelets.

It localises to the nucleus. Involved in the RNA silencing pathway. Cleaves double-stranded RNA to produce small interfering RNAs (siRNAs) which target the selective destruction of complementary RNAs. Required for the production of 21 nucleotide siRNAs. Regulates shoot apical meristem (SAM) initiation and maintenance, leaf polarization and lemma polarity through the trans-acting siRNAS (ta-siRNAs) pathway, which probably modulate the expression of the ARF2, ARF3, ARF4, ARF14 and ARF15 genes. Can process endogenous 21 nucleotide siRNAs derived from an imperfect inverted repeat. May not be involved in microRNAs (miRNAs) production. This chain is Endoribonuclease Dicer homolog 4 (DCL4), found in Oryza sativa subsp. japonica (Rice).